Reading from the N-terminus, the 250-residue chain is Probable transcriptional regulatory protein Ctha_1786 (250 aa).

The protein belongs to the TACO1 family.

The protein resides in the cytoplasm. In Chloroherpeton thalassium (strain ATCC 35110 / GB-78), this protein is Probable transcriptional regulatory protein Ctha_1786.